A 369-amino-acid chain; its full sequence is Glutamate 5-kinase (369 aa).

Lys-14 lines the ATP pocket. Residues Ser-56, Asp-143, and Asn-155 each coordinate substrate. Residues 175-176 (SD) and 215-221 (TGGMASK) contribute to the ATP site. The 75-residue stretch at 277–351 (AGKIRLDQGA…GMKTQELPDD (75 aa)) folds into the PUA domain.

It belongs to the glutamate 5-kinase family.

It is found in the cytoplasm. The enzyme catalyses L-glutamate + ATP = L-glutamyl 5-phosphate + ADP. The protein operates within amino-acid biosynthesis; L-proline biosynthesis; L-glutamate 5-semialdehyde from L-glutamate: step 1/2. Its function is as follows. Catalyzes the transfer of a phosphate group to glutamate to form L-glutamate 5-phosphate. This Corynebacterium efficiens (strain DSM 44549 / YS-314 / AJ 12310 / JCM 11189 / NBRC 100395) protein is Glutamate 5-kinase.